Reading from the N-terminus, the 118-residue chain is Small ribosomal subunit protein uS13 (118 aa).

Residues S94–K118 are disordered.

The protein belongs to the universal ribosomal protein uS13 family. In terms of assembly, part of the 30S ribosomal subunit. Forms a loose heterodimer with protein S19. Forms two bridges to the 50S subunit in the 70S ribosome.

Its function is as follows. Located at the top of the head of the 30S subunit, it contacts several helices of the 16S rRNA. In the 70S ribosome it contacts the 23S rRNA (bridge B1a) and protein L5 of the 50S subunit (bridge B1b), connecting the 2 subunits; these bridges are implicated in subunit movement. Contacts the tRNAs in the A and P-sites. This Idiomarina loihiensis (strain ATCC BAA-735 / DSM 15497 / L2-TR) protein is Small ribosomal subunit protein uS13.